Consider the following 272-residue polypeptide: 4-diphosphocytidyl-2-C-methyl-D-erythritol kinase (272 aa).

Lys-14 is an active-site residue. Position 92–102 (Pro-92–Ser-102) interacts with ATP. Residue Asp-132 is part of the active site.

This sequence belongs to the GHMP kinase family. IspE subfamily.

It carries out the reaction 4-CDP-2-C-methyl-D-erythritol + ATP = 4-CDP-2-C-methyl-D-erythritol 2-phosphate + ADP + H(+). Its pathway is isoprenoid biosynthesis; isopentenyl diphosphate biosynthesis via DXP pathway; isopentenyl diphosphate from 1-deoxy-D-xylulose 5-phosphate: step 3/6. Catalyzes the phosphorylation of the position 2 hydroxy group of 4-diphosphocytidyl-2C-methyl-D-erythritol. In Fervidobacterium nodosum (strain ATCC 35602 / DSM 5306 / Rt17-B1), this protein is 4-diphosphocytidyl-2-C-methyl-D-erythritol kinase.